The sequence spans 215 residues: Beta-crystallin A3 (215 aa).

Methionine 1 carries the N-acetylmethionine modification. Residues methionine 1 to methionine 24 are disordered. An N-terminal arm region spans residues methionine 1–proline 30. Glutamate 2 carries the N-acetylalanine modification. Beta/gamma crystallin 'Greek key' domains follow at residues tryptophan 31–cysteine 70 and glycine 71–cysteine 117. S-glutathionyl cysteine; alternate is present on residues cysteine 82 and cysteine 117. Cysteine 82 and cysteine 117 each carry S-methylcysteine; alternate. The interval serine 118–glutamate 123 is connecting peptide. Beta/gamma crystallin 'Greek key' domains are found at residues serine 124 to cysteine 165 and glycine 166 to glutamine 214.

This sequence belongs to the beta/gamma-crystallin family. Homo/heterodimer, or complexes of higher-order. The structure of beta-crystallin oligomers seems to be stabilized through interactions between the N-terminal arms. Interacts with CRYBA1. Post-translationally, specific cleavages in the N-terminal arm occur during lens maturation and give rise to several truncated forms. Isoform A1 contains a N-acetylalanine at position 2.

Its function is as follows. Crystallins are the dominant structural components of the vertebrate eye lens. This is Beta-crystallin A3 from Bos taurus (Bovine).